Here is a 267-residue protein sequence, read N- to C-terminus: Expansin-B10 (267 aa).

The signal sequence occupies residues methionine 1–cysteine 22. Asparagine 32 carries N-linked (GlcNAc...) asparagine glycosylation. An Expansin-like EG45 domain is found at glycine 61 to glutamate 167. 3 disulfides stabilise this stretch: cysteine 64/cysteine 92, cysteine 95/cysteine 162, and cysteine 100/cysteine 106. The Expansin-like CBD domain maps to asparagine 181–serine 262. An N-linked (GlcNAc...) asparagine glycan is attached at asparagine 213.

Belongs to the expansin family. Expansin B subfamily.

It localises to the secreted. Its subcellular location is the cell wall. The protein resides in the membrane. May cause loosening and extension of plant cell walls by disrupting non-covalent bonding between cellulose microfibrils and matrix glucans. No enzymatic activity has been found. May be required for rapid internodal elongation in deepwater rice during submergence. The sequence is that of Expansin-B10 (EXPB10) from Oryza sativa subsp. japonica (Rice).